The sequence spans 91 residues: Translation initiation factor IF-1 (91 aa).

Positions 1-72 (MAKEELLEFE…DRGRINFRHK (72 aa)) constitute an S1-like domain. The tract at residues 70–91 (RHKAEGNAPPPGARRQQNFRRR) is disordered.

Belongs to the IF-1 family. In terms of assembly, component of the 30S ribosomal translation pre-initiation complex which assembles on the 30S ribosome in the order IF-2 and IF-3, IF-1 and N-formylmethionyl-tRNA(fMet); mRNA recruitment can occur at any time during PIC assembly.

The protein resides in the cytoplasm. Functionally, one of the essential components for the initiation of protein synthesis. Stabilizes the binding of IF-2 and IF-3 on the 30S subunit to which N-formylmethionyl-tRNA(fMet) subsequently binds. Helps modulate mRNA selection, yielding the 30S pre-initiation complex (PIC). Upon addition of the 50S ribosomal subunit IF-1, IF-2 and IF-3 are released leaving the mature 70S translation initiation complex. This chain is Translation initiation factor IF-1, found in Azorhizobium caulinodans (strain ATCC 43989 / DSM 5975 / JCM 20966 / LMG 6465 / NBRC 14845 / NCIMB 13405 / ORS 571).